The sequence spans 101 residues: Replication restart protein PriB (101 aa).

One can recognise an SSB domain in the interval 1–101 (MTTNNLVLSG…IHAENVELKT (101 aa)).

The protein belongs to the PriB family. In terms of assembly, homodimer. Interacts with PriA and DnaT. Component of the replication restart primosome. Primosome assembly occurs via a 'hand-off' mechanism. PriA binds to replication forks, subsequently PriB then DnaT bind; DnaT then displaces ssDNA to generate the helicase loading substrate.

Its function is as follows. Involved in the restart of stalled replication forks, which reloads the replicative helicase on sites other than the origin of replication; the PriA-PriB pathway is the major replication restart pathway. During primosome assembly it facilitates complex formation between PriA and DnaT on DNA; stabilizes PriA on DNA. Stimulates the DNA unwinding activity of PriA helicase. The polypeptide is Replication restart protein PriB (Shewanella oneidensis (strain ATCC 700550 / JCM 31522 / CIP 106686 / LMG 19005 / NCIMB 14063 / MR-1)).